Reading from the N-terminus, the 442-residue chain is Probable xylan O-acetyltransferase 8 (442 aa).

Over 1 to 13 the chain is Cytoplasmic; the sequence is MVQLPAMKRVKGR. A helical; Signal-anchor for type II membrane protein membrane pass occupies residues 14-34; it reads APLSVVVAIIGGLALAGIIFT. The Lumenal portion of the chain corresponds to 35–442; the sequence is EDLRGLTEVK…TWNRLLYAHL (408 aa). N-linked (GlcNAc...) asparagine glycosylation occurs at asparagine 96. 4 disulfides stabilise this stretch: cysteine 100–cysteine 151, cysteine 122–cysteine 187, cysteine 131–cysteine 426, and cysteine 344–cysteine 422. The GDS motif signature appears at 174–176; it reads GDS. Residue serine 176 is the Nucleophile of the active site. 3 N-linked (GlcNAc...) asparagine glycosylation sites follow: asparagine 217, asparagine 346, and asparagine 384. Aspartate 421 functions as the Proton donor in the catalytic mechanism. Positions 421-424 match the DXXH motif motif; sequence DCIH. Histidine 424 (proton acceptor) is an active-site residue.

It belongs to the PC-esterase family. TBL subfamily.

It localises to the golgi apparatus membrane. Functionally, probable xylan acetyltransferase required for 2-O- and 3-O-monoacetylation of xylosyl residues in xylan. Possesses extremely low activity in vitro. This Oryza sativa subsp. japonica (Rice) protein is Probable xylan O-acetyltransferase 8.